Consider the following 1024-residue polypeptide: Beta-galactosidase (1024 aa).

Residues Asn-103 and Asp-202 each coordinate substrate. Asp-202 serves as a coordination point for Na(+). Positions 417, 419, and 462 each coordinate Mg(2+). Substrate contacts are provided by residues Glu-462 and Glu-538–His-541. Glu-462 functions as the Proton donor in the catalytic mechanism. Residue Glu-538 is the Nucleophile of the active site. Asn-598 contributes to the Mg(2+) binding site. Phe-602 and Asn-605 together coordinate Na(+). Positions 605 and 1000 each coordinate substrate.

It belongs to the glycosyl hydrolase 2 family. In terms of assembly, homotetramer. Mg(2+) serves as cofactor. Na(+) is required as a cofactor.

It carries out the reaction Hydrolysis of terminal non-reducing beta-D-galactose residues in beta-D-galactosides.. In Klebsiella pneumoniae, this protein is Beta-galactosidase.